A 240-amino-acid polypeptide reads, in one-letter code: Large ribosomal subunit protein uL1 (240 aa).

The protein belongs to the universal ribosomal protein uL1 family. Part of the 50S ribosomal subunit.

Its function is as follows. Binds directly to 23S rRNA. The L1 stalk is quite mobile in the ribosome, and is involved in E site tRNA release. Functionally, protein L1 is also a translational repressor protein, it controls the translation of the L11 operon by binding to its mRNA. The chain is Large ribosomal subunit protein uL1 from Nocardioides sp. (strain ATCC BAA-499 / JS614).